The sequence spans 361 residues: Phospho-N-acetylmuramoyl-pentapeptide-transferase (361 aa).

10 helical membrane passes run 28–48 (LSMF…IKFF), 70–90 (IGTP…GILL), 94–114 (LSNY…LLGA), 129–149 (VSFK…IYGL), 169–189 (LIIN…VGSS), 205–225 (PVIL…NIVF), 237–257 (MGEV…FLWF), 264–284 (IFMG…IGII), 289–309 (IVLA…IIQV), and 338–358 (TVVI…LATL).

It belongs to the glycosyltransferase 4 family. MraY subfamily. Mg(2+) serves as cofactor.

It localises to the cell inner membrane. It catalyses the reaction UDP-N-acetyl-alpha-D-muramoyl-L-alanyl-gamma-D-glutamyl-meso-2,6-diaminopimeloyl-D-alanyl-D-alanine + di-trans,octa-cis-undecaprenyl phosphate = di-trans,octa-cis-undecaprenyl diphospho-N-acetyl-alpha-D-muramoyl-L-alanyl-D-glutamyl-meso-2,6-diaminopimeloyl-D-alanyl-D-alanine + UMP. Its pathway is cell wall biogenesis; peptidoglycan biosynthesis. In terms of biological role, catalyzes the initial step of the lipid cycle reactions in the biosynthesis of the cell wall peptidoglycan: transfers peptidoglycan precursor phospho-MurNAc-pentapeptide from UDP-MurNAc-pentapeptide onto the lipid carrier undecaprenyl phosphate, yielding undecaprenyl-pyrophosphoryl-MurNAc-pentapeptide, known as lipid I. This is Phospho-N-acetylmuramoyl-pentapeptide-transferase from Pelagibacter ubique (strain HTCC1062).